A 245-amino-acid chain; its full sequence is Probable phosphatase YpAngola_A2446 (245 aa).

Residues H7, H9, H15, H40, E73, H101, H131, D192, and H194 each contribute to the Zn(2+) site.

The protein belongs to the PHP family. As to quaternary structure, homotrimer. The cofactor is Zn(2+).

This is Probable phosphatase YpAngola_A2446 from Yersinia pestis bv. Antiqua (strain Angola).